The sequence spans 1009 residues: Type VII secretion system accessory factor EsaA (1009 aa).

The helical transmembrane segment at 7–27 (IYALIVTLIIIIAIVSMIFFV) threads the bilayer. The segment covering 680–697 (TFAEEPQEPKIDKGKNDE) has biased composition (basic and acidic residues). A disordered region spans residues 680-707 (TFAEEPQEPKIDKGKNDEFNTMSSNLDK). The next 5 membrane-spanning stretches (helical) occupy residues 822 to 842 (ISPT…AYIF), 869 to 889 (VITS…VGLI), 903 to 923 (KFIL…TYLL), 928 to 948 (SIGM…MNNL), and 979 to 999 (IGLV…LNMF).

Belongs to the EsaA family. In terms of assembly, homodimer. Interacts with EssB.

It is found in the cell membrane. In terms of biological role, component of the type VII secretion system (Ess). Provides together with EssB and other components such as EssC and EssE a secretion platform across the cytoplasmic membrane in the host. This chain is Type VII secretion system accessory factor EsaA, found in Staphylococcus aureus (strain COL).